A 224-amino-acid chain; its full sequence is 7-cyano-7-deazaguanine synthase (224 aa).

12 to 22 lines the ATP pocket; the sequence is MSGGMDSTLGA. Positions 191, 199, 202, and 205 each coordinate Zn(2+).

This sequence belongs to the QueC family. It depends on Zn(2+) as a cofactor.

The enzyme catalyses 7-carboxy-7-deazaguanine + NH4(+) + ATP = 7-cyano-7-deazaguanine + ADP + phosphate + H2O + H(+). It functions in the pathway purine metabolism; 7-cyano-7-deazaguanine biosynthesis. Functionally, catalyzes the ATP-dependent conversion of 7-carboxy-7-deazaguanine (CDG) to 7-cyano-7-deazaguanine (preQ(0)). In Sulfurimonas denitrificans (strain ATCC 33889 / DSM 1251) (Thiomicrospira denitrificans (strain ATCC 33889 / DSM 1251)), this protein is 7-cyano-7-deazaguanine synthase.